Here is a 202-residue protein sequence, read N- to C-terminus: Glycoprotein U22 (202 aa).

Positions 1 to 20 (MVPQGCSLVWVSALYVSVIA) are cleaved as a signal peptide. N-linked (GlcNAc...) asparagine; by host glycosylation is found at N54, N107, N112, and N125. A helical transmembrane segment spans residues 172–192 (FVYYCISVYLFAVVVLCSCWF).

The protein localises to the membrane. The protein is Glycoprotein U22 (U22) of Homo sapiens (Human).